A 156-amino-acid polypeptide reads, in one-letter code: Protein L* (156 aa).

Functionally, may be required for viral persistance in the host. This is Protein L* from Theiler's murine encephalomyelitis virus (strain DA) (TMEV).